Consider the following 360-residue polypeptide: Phenylalanine--tRNA ligase alpha subunit (360 aa).

Residue E260 participates in Mg(2+) binding.

This sequence belongs to the class-II aminoacyl-tRNA synthetase family. Phe-tRNA synthetase alpha subunit type 1 subfamily. As to quaternary structure, tetramer of two alpha and two beta subunits. It depends on Mg(2+) as a cofactor.

It is found in the cytoplasm. The enzyme catalyses tRNA(Phe) + L-phenylalanine + ATP = L-phenylalanyl-tRNA(Phe) + AMP + diphosphate + H(+). The chain is Phenylalanine--tRNA ligase alpha subunit from Methylocella silvestris (strain DSM 15510 / CIP 108128 / LMG 27833 / NCIMB 13906 / BL2).